The sequence spans 184 residues: Ribose 1,5-bisphosphate phosphokinase PhnN (184 aa).

ATP is bound at residue 11–18 (GPSGAGKD).

Belongs to the ribose 1,5-bisphosphokinase family.

It catalyses the reaction alpha-D-ribose 1,5-bisphosphate + ATP = 5-phospho-alpha-D-ribose 1-diphosphate + ADP. Its pathway is metabolic intermediate biosynthesis; 5-phospho-alpha-D-ribose 1-diphosphate biosynthesis; 5-phospho-alpha-D-ribose 1-diphosphate from D-ribose 5-phosphate (route II): step 3/3. Functionally, catalyzes the phosphorylation of ribose 1,5-bisphosphate to 5-phospho-D-ribosyl alpha-1-diphosphate (PRPP). This Burkholderia pseudomallei (strain K96243) protein is Ribose 1,5-bisphosphate phosphokinase PhnN.